A 373-amino-acid chain; its full sequence is Flagellar P-ring protein (373 aa).

Positions 1–28 are cleaved as a signal peptide; that stretch reads MPRVSTHLVKLAAAALCALLLSAVAASA.

It belongs to the FlgI family. The basal body constitutes a major portion of the flagellar organelle and consists of four rings (L,P,S, and M) mounted on a central rod.

The protein localises to the periplasm. The protein resides in the bacterial flagellum basal body. Functionally, assembles around the rod to form the L-ring and probably protects the motor/basal body from shearing forces during rotation. This is Flagellar P-ring protein from Rhodopseudomonas palustris (strain ATCC BAA-98 / CGA009).